We begin with the raw amino-acid sequence, 152 residues long: UPF0178 protein NIS_0137 (152 aa).

The protein belongs to the UPF0178 family.

This is UPF0178 protein NIS_0137 from Nitratiruptor sp. (strain SB155-2).